Here is a 715-residue protein sequence, read N- to C-terminus: Fatty acid oxidation complex subunit alpha (715 aa).

The enoyl-CoA hydratase stretch occupies residues 1 to 190 (MTTTSAFMLN…KAGLVDDVVP (190 aa)). The interval 306 to 715 (GPLNSVGILG…WTNGETDQGN (410 aa)) is 3-hydroxyacyl-CoA dehydrogenase.

It in the N-terminal section; belongs to the enoyl-CoA hydratase/isomerase family. This sequence in the central section; belongs to the 3-hydroxyacyl-CoA dehydrogenase family. Heterotetramer of two alpha chains (FadJ) and two beta chains (FadI).

It is found in the cytoplasm. It carries out the reaction a (3S)-3-hydroxyacyl-CoA = a (2E)-enoyl-CoA + H2O. It catalyses the reaction a 4-saturated-(3S)-3-hydroxyacyl-CoA = a (3E)-enoyl-CoA + H2O. The enzyme catalyses a (3S)-3-hydroxyacyl-CoA + NAD(+) = a 3-oxoacyl-CoA + NADH + H(+). The catalysed reaction is (3S)-3-hydroxybutanoyl-CoA = (3R)-3-hydroxybutanoyl-CoA. It functions in the pathway lipid metabolism; fatty acid beta-oxidation. Catalyzes the formation of a hydroxyacyl-CoA by addition of water on enoyl-CoA. Also exhibits 3-hydroxyacyl-CoA epimerase and 3-hydroxyacyl-CoA dehydrogenase activities. The polypeptide is Fatty acid oxidation complex subunit alpha (Salmonella newport (strain SL254)).